The primary structure comprises 135 residues: Fatty acid-binding protein 5 (135 aa).

Position 2 is an N-acetylalanine (A2). A Phosphoserine modification is found at S3. Positions 24–34 (KELGVGLALRK) match the Nuclear localization signal motif. 1-eicosanoylglycerol-binding residues include C43, T56, and R109. A disulfide bridge connects residues C120 and C127. Position 129 to 131 (129 to 131 (RVY)) interacts with 1-eicosanoylglycerol. 129 to 131 (RVY) provides a ligand contact to (9Z,12Z)-octadecadienoate. Position 131 (Y131) interacts with hexadecanoate. An N-eicosanoyl ethanolamine-binding site is contributed by Y131. The residue at position 131 (Y131) is a Phosphotyrosine.

The protein belongs to the calycin superfamily. Fatty-acid binding protein (FABP) family. Monomer. Widely expressed.

The protein resides in the cytoplasm. It is found in the nucleus. Its subcellular location is the synapse. The protein localises to the postsynaptic density. It localises to the secreted. It carries out the reaction hexadecanoate(out) = hexadecanoate(in). It catalyses the reaction (9Z,12Z)-octadecadienoate(out) = (9Z,12Z)-octadecadienoate(in). The enzyme catalyses (9Z)-octadecenoate(out) = (9Z)-octadecenoate(in). In terms of biological role, intracellular carrier for long-chain fatty acids and related active lipids, such as endocannabinoids, that regulate the metabolism and actions of the ligands they bind. In addition to the cytosolic transport, selectively delivers specific fatty acids from the cytosol to the nucleus, wherein they activate nuclear receptors. Delivers retinoic acid to the nuclear receptor peroxisome proliferator-activated receptor delta; which promotes proliferation and survival. May also serve as a synaptic carrier of endocannabinoid at central synapses and thus controls retrograde endocannabinoid signaling. Modulates inflammation by regulating PTGES induction via NF-kappa-B activation, and prostaglandin E2 (PGE2) biosynthesis during inflammation. May be involved in keratinocyte differentiation. The protein is Fatty acid-binding protein 5 of Mus musculus (Mouse).